We begin with the raw amino-acid sequence, 365 residues long: Protein RecA (365 aa).

81 to 88 (GPESSGKT) provides a ligand contact to ATP.

This sequence belongs to the RecA family.

It is found in the cytoplasm. Its function is as follows. Can catalyze the hydrolysis of ATP in the presence of single-stranded DNA, the ATP-dependent uptake of single-stranded DNA by duplex DNA, and the ATP-dependent hybridization of homologous single-stranded DNAs. It interacts with LexA causing its activation and leading to its autocatalytic cleavage. The protein is Protein RecA of Borreliella burgdorferi (strain ATCC 35210 / DSM 4680 / CIP 102532 / B31) (Borrelia burgdorferi).